Here is a 202-residue protein sequence, read N- to C-terminus: Imidazoleglycerol-phosphate dehydratase (202 aa).

Belongs to the imidazoleglycerol-phosphate dehydratase family.

The protein resides in the cytoplasm. It carries out the reaction D-erythro-1-(imidazol-4-yl)glycerol 3-phosphate = 3-(imidazol-4-yl)-2-oxopropyl phosphate + H2O. The protein operates within amino-acid biosynthesis; L-histidine biosynthesis; L-histidine from 5-phospho-alpha-D-ribose 1-diphosphate: step 6/9. This chain is Imidazoleglycerol-phosphate dehydratase, found in Lactococcus lactis subsp. cremoris (strain SK11).